The sequence spans 458 residues: Transcription factor Atf1 (458 aa).

The 64-residue stretch at 347-410 folds into the bZIP domain; sequence EEKRRNFLER…VNLKTLLLAH (64 aa). A basic motif region spans residues 349 to 378; sequence KRRNFLERNRVAALKCRQRKKQWLANLQNK. The leucine-zipper stretch occupies residues 389-403; the sequence is LTATVTQLREEIVNL.

Belongs to the bZIP family.

Its subcellular location is the nucleus. In terms of biological role, transcription factor that positively regulates vegetative growth, reproduction, and osmotic stress response. The sequence is that of Transcription factor Atf1 from Penicillium expansum (Blue mold rot fungus).